The following is a 220-amino-acid chain: Acetate CoA-transferase subunit alpha (220 aa).

Residue 24–30 participates in CoA binding; the sequence is GGFMGIG.

This sequence belongs to the 3-oxoacid CoA-transferase subunit A family. Heterotetramer composed of two alpha subunits (AtoD) and two beta subunits (AtoA).

The protein resides in the cytoplasm. It catalyses the reaction an acyl-CoA + acetate = a carboxylate + acetyl-CoA. It carries out the reaction acetoacetate + acetyl-CoA = acetoacetyl-CoA + acetate. The catalysed reaction is butanoate + acetyl-CoA = butanoyl-CoA + acetate. The enzyme catalyses acetoacetate + butanoyl-CoA = acetoacetyl-CoA + butanoate. Its pathway is lipid metabolism; short-chain fatty acid metabolism. Its activity is regulated as follows. Inhibited by p-chloromercuribenzoate. In terms of biological role, coenzyme A transferase which is involved in short-chain fatty acid degradation and catalyzes the activation of short-chain fatty acids to their respective CoA thiolesters. During acetoacetate degradation, catalyzes the transfer of CoA from acetyl-CoA to acetoacetate by a mechanism involving a covalent enzyme-CoA compound as a reaction intermediate. Utilizes a variety of short chain acyl-CoA and carboxylic acid substrates but exhibits maximal activity with normal and 3-keto substrates. This chain is Acetate CoA-transferase subunit alpha, found in Escherichia coli (strain K12).